The following is a 254-amino-acid chain: Triosephosphate isomerase (254 aa).

10 to 12 (NWK) contributes to the substrate binding site. H96 acts as the Electrophile in catalysis. The active-site Proton acceptor is the E168. Residues G174, S214, and 235 to 236 (GG) each bind substrate.

This sequence belongs to the triosephosphate isomerase family. In terms of assembly, homodimer.

The protein localises to the cytoplasm. The catalysed reaction is D-glyceraldehyde 3-phosphate = dihydroxyacetone phosphate. It functions in the pathway carbohydrate biosynthesis; gluconeogenesis. Its pathway is carbohydrate degradation; glycolysis; D-glyceraldehyde 3-phosphate from glycerone phosphate: step 1/1. Functionally, involved in the gluconeogenesis. Catalyzes stereospecifically the conversion of dihydroxyacetone phosphate (DHAP) to D-glyceraldehyde-3-phosphate (G3P). The chain is Triosephosphate isomerase from Rhodopirellula baltica (strain DSM 10527 / NCIMB 13988 / SH1).